The sequence spans 152 residues: Allergen Asp f 15 (152 aa).

The N-terminal stretch at 1-19 (MKFTTPISLISLFVSSALA) is a signal peptide. 2 disulfides stabilise this stretch: cysteine 53-cysteine 90 and cysteine 93-cysteine 148.

This sequence belongs to the cerato-platanin family.

Its subcellular location is the secreted. This is Allergen Asp f 15 from Aspergillus fumigatus (strain ATCC MYA-4609 / CBS 101355 / FGSC A1100 / Af293) (Neosartorya fumigata).